The chain runs to 398 residues: Cytochrome b (398 aa).

Helical transmembrane passes span 38–58 (FGPLAGICLVIQIVTGVFLAM), 82–104 (WFLRYMHANGASMFLIVVHFHMF), 119–139 (VRCSGVVIFLLMIVTAFIGYV), and 185–205 (FFSLHYLLPFLLVGASILHLG). 2 residues coordinate heme b: His-88 and His-102. Heme b is bound by residues His-189 and His-203. A ubiquinone is bound at residue His-208. Helical transmembrane passes span 231-251 (YYVKDLVGWVAFAIFSSIFIF), 295-316 (AGGVAAIAPVFICLLALPFLNQ), 328-348 (IYHIIYLLFLADRLLLGWIGC), and 355-374 (FVTIGQISPFVFFLFFAIMP).

This sequence belongs to the cytochrome b family. In terms of assembly, the main subunits of complex b-c1 are: cytochrome b, cytochrome c1 and the Rieske protein. It depends on heme b as a cofactor.

The protein resides in the mitochondrion inner membrane. Its function is as follows. Component of the ubiquinol-cytochrome c reductase complex (complex III or cytochrome b-c1 complex) that is part of the mitochondrial respiratory chain. The b-c1 complex mediates electron transfer from ubiquinol to cytochrome c. Contributes to the generation of a proton gradient across the mitochondrial membrane that is then used for ATP synthesis. The sequence is that of Cytochrome b (MT-CYB) from Daucus carota (Wild carrot).